The sequence spans 440 residues: Chromosome partition protein MukF (440 aa).

The interval L208–I236 is leucine-zipper.

This sequence belongs to the MukF family. As to quaternary structure, interacts, and probably forms a ternary complex, with MukE and MukB via its C-terminal region. The complex formation is stimulated by calcium or magnesium. It is required for an interaction between MukE and MukB.

It is found in the cytoplasm. Its subcellular location is the nucleoid. In terms of biological role, involved in chromosome condensation, segregation and cell cycle progression. May participate in facilitating chromosome segregation by condensation DNA from both sides of a centrally located replisome during cell division. Not required for mini-F plasmid partitioning. Probably acts via its interaction with MukB and MukE. Overexpression results in anucleate cells. It has a calcium binding activity. This Escherichia coli O17:K52:H18 (strain UMN026 / ExPEC) protein is Chromosome partition protein MukF.